Reading from the N-terminus, the 209-residue chain is Mediator of RNA polymerase II transcription subunit 20 (209 aa).

This sequence belongs to the Mediator complex subunit 20 family. Component of the Mediator complex.

Its subcellular location is the nucleus. Functionally, component of the Mediator complex, a coactivator involved in the regulated transcription of nearly all RNA polymerase II-dependent genes. Mediator functions as a bridge to convey information from gene-specific regulatory proteins to the basal RNA polymerase II transcription machinery. Mediator is recruited to promoters by direct interactions with regulatory proteins and serves as a scaffold for the assembly of a functional preinitiation complex with RNA polymerase II and the general transcription factors. This Eremothecium gossypii (strain ATCC 10895 / CBS 109.51 / FGSC 9923 / NRRL Y-1056) (Yeast) protein is Mediator of RNA polymerase II transcription subunit 20 (SRB2).